The primary structure comprises 78 residues: ATP synthase subunit c (78 aa).

2 consecutive transmembrane segments (helical) span residues alanine 9–tryptophan 29 and alanine 56–valine 76.

The protein belongs to the ATPase C chain family. As to quaternary structure, F-type ATPases have 2 components, F(1) - the catalytic core - and F(0) - the membrane proton channel. F(1) has five subunits: alpha(3), beta(3), gamma(1), delta(1), epsilon(1). F(0) has three main subunits: a(1), b(2) and c(10-14). The alpha and beta chains form an alternating ring which encloses part of the gamma chain. F(1) is attached to F(0) by a central stalk formed by the gamma and epsilon chains, while a peripheral stalk is formed by the delta and b chains.

The protein localises to the cell membrane. Its function is as follows. F(1)F(0) ATP synthase produces ATP from ADP in the presence of a proton or sodium gradient. F-type ATPases consist of two structural domains, F(1) containing the extramembraneous catalytic core and F(0) containing the membrane proton channel, linked together by a central stalk and a peripheral stalk. During catalysis, ATP synthesis in the catalytic domain of F(1) is coupled via a rotary mechanism of the central stalk subunits to proton translocation. In terms of biological role, key component of the F(0) channel; it plays a direct role in translocation across the membrane. A homomeric c-ring of between 10-14 subunits forms the central stalk rotor element with the F(1) delta and epsilon subunits. In Malacoplasma penetrans (strain HF-2) (Mycoplasma penetrans), this protein is ATP synthase subunit c.